Here is a 345-residue protein sequence, read N- to C-terminus: Calcium/calmodulin-dependent protein kinase type 1 (345 aa).

The interval 1–23 (MPLFGSKKETAKKSSKKDKDEGK) is disordered. The 257-residue stretch at 31 to 287 (YILKDLLGTG…CKQALGHPWI (257 aa)) folds into the Protein kinase domain. ATP-binding positions include 37–45 (LGTGAFSQV) and lysine 61. The Proton acceptor role is filled by aspartate 153. Residues 287–327 (ISGNAASTENIHSSVSEQLKKNFAKSRWRQAYHATAVIRQM) form an autoinhibitory domain region. A calmodulin-binding region spans residues 307-328 (KNFAKSRWRQAYHATAVIRQMR).

This sequence belongs to the protein kinase superfamily. CAMK Ser/Thr protein kinase family. CaMK subfamily. As to expression, highly expressed in hepatopancreas and to a lesser extent in gills. Low expression in hemocytes, testis, ovary, heart, eyestalk, muscle and epidermis.

The catalysed reaction is L-seryl-[protein] + ATP = O-phospho-L-seryl-[protein] + ADP + H(+). It carries out the reaction L-threonyl-[protein] + ATP = O-phospho-L-threonyl-[protein] + ADP + H(+). With respect to regulation, activated by Ca(2+)/calmodulin. Binding of calmodulin results in conformational change that relieves intrasteric autoinhibition. In terms of biological role, calcium/calmodulin-dependent protein kinase that operates in the calcium-triggered CaMKK-CaMK1 signaling cascade and, upon calcium influx, regulates transcription activators activity, cell cycle, hormone production, cell differentiation, actin filament organization and neurite outgrowth. Involved in molting. This is Calcium/calmodulin-dependent protein kinase type 1 from Macrobrachium nipponense (Oriental river shrimp).